The sequence spans 256 residues: Small ribosomal subunit protein eS1 (256 aa).

A compositionally biased stretch (basic residues) spans 1–18 (MAVGKNKRLSKGKKGLKK). Residues 1 to 20 (MAVGKNKRLSKGKKGLKKRT) are disordered. A2 is subject to N-acetylalanine; partial.

The protein belongs to the eukaryotic ribosomal protein eS1 family. In terms of assembly, component of the small ribosomal subunit. Mature ribosomes consist of a small (40S) and a large (60S) subunit. The 40S subunit contains about 33 different proteins and 1 molecule of RNA (18S). The 60S subunit contains about 49 different proteins and 3 molecules of RNA (25S, 5.8S and 5S).

The protein resides in the cytoplasm. In Talaromyces marneffei (strain ATCC 18224 / CBS 334.59 / QM 7333) (Penicillium marneffei), this protein is Small ribosomal subunit protein eS1 (rps1).